The sequence spans 457 residues: Transmembrane protease serine 5 (457 aa).

The disordered stretch occupies residues Met1–Gly21. Residues Met1–Cys49 are Cytoplasmic-facing. The helical; Signal-anchor for type II membrane protein transmembrane segment at Ala50–Leu70 threads the bilayer. The Extracellular segment spans residues Tyr71–Leu457. Residues Phe112–Ser207 enclose the SRCR domain. 7 cysteine pairs are disulfide-bonded: Cys135–Cys196, Cys148–Cys206, Cys209–Cys328, Cys243–Cys259, Cys342–Cys411, Cys374–Cys390, and Cys401–Cys429. N-linked (GlcNAc...) asparagine glycans are attached at residues Asn163, Asn170, and Asn195. The Peptidase S1 domain maps to Ile218 to Gln453. Active-site charge relay system residues include His258 and Asp308. N-linked (GlcNAc...) asparagine glycans are attached at residues Asn319 and Asn375. Residue Ser405 is the Charge relay system of the active site.

Belongs to the peptidase S1 family. Brain-specific. Predominantly expressed in neurons, in their axons, and at the synapses of motoneurons in the spinal cord.

It localises to the cell membrane. Its function is as follows. May play a role in hearing. The chain is Transmembrane protease serine 5 (TMPRSS5) from Homo sapiens (Human).